Consider the following 146-residue polypeptide: Cytidine deaminase (146 aa).

In terms of domain architecture, CMP/dCMP-type deaminase spans 13–140 (EHVQRLLLSS…ELLPASFGPE (128 aa)). Substrate is bound at residue 54–56 (NIE). Zn(2+) is bound at residue C65. The active-site Proton donor is the E67. Residues C99 and C102 each coordinate Zn(2+).

This sequence belongs to the cytidine and deoxycytidylate deaminase family. In terms of assembly, homotetramer. The cofactor is Zn(2+).

It carries out the reaction cytidine + H2O + H(+) = uridine + NH4(+). The catalysed reaction is 2'-deoxycytidine + H2O + H(+) = 2'-deoxyuridine + NH4(+). Its function is as follows. This enzyme scavenges exogenous and endogenous cytidine and 2'-deoxycytidine for UMP synthesis. The polypeptide is Cytidine deaminase (Cda) (Mus musculus (Mouse)).